The sequence spans 339 residues: Ribosome biogenesis protein BRX1 homolog (339 aa).

Residues 1–34 are disordered; sequence MSAYKRKRGSLPEVATNTKKAKKQLAGSEQEATA. Positions 53–242 constitute a Brix domain; the sequence is ERVLIFSSRG…LIKIFKGSFG (190 aa). Positions 304 to 339 are disordered; the sequence is AEEKPQVIETEPPAPKPKMKRKDKQFKRQRMAKKRM. Residues 320–339 show a composition bias toward basic residues; sequence PKMKRKDKQFKRQRMAKKRM.

It belongs to the BRX1 family. In terms of tissue distribution, ubiquitous.

It localises to the nucleus. The protein localises to the nucleolus. Functionally, required for biogenesis of the 60S ribosomal subunit. This chain is Ribosome biogenesis protein BRX1 homolog (brix1), found in Xenopus laevis (African clawed frog).